A 498-amino-acid chain; its full sequence is ATP synthase subunit beta, chloroplastic (498 aa).

Residue 172-179 (GGAGVGKT) coordinates ATP.

The protein belongs to the ATPase alpha/beta chains family. F-type ATPases have 2 components, CF(1) - the catalytic core - and CF(0) - the membrane proton channel. CF(1) has five subunits: alpha(3), beta(3), gamma(1), delta(1), epsilon(1). CF(0) has four main subunits: a(1), b(1), b'(1) and c(9-12).

It localises to the plastid. Its subcellular location is the chloroplast thylakoid membrane. The catalysed reaction is ATP + H2O + 4 H(+)(in) = ADP + phosphate + 5 H(+)(out). In terms of biological role, produces ATP from ADP in the presence of a proton gradient across the membrane. The catalytic sites are hosted primarily by the beta subunits. This is ATP synthase subunit beta, chloroplastic from Brasenia schreberi (Water shield).